The primary structure comprises 425 residues: Inner membrane protein YqcE (425 aa).

The Cytoplasmic portion of the chain corresponds to 1–8 (MQHNSYRR). Residues 9-29 (WITLAIISFSGGVSFDLAYLR) traverse the membrane as a helical segment. At 30 to 48 (YIYQIPMAKFMGFSNTEIG) the chain is on the periplasmic side. The chain crosses the membrane as a helical span at residues 49–69 (LIMSTFGIAAIILYAPSGVIA). The Cytoplasmic portion of the chain corresponds to 70–75 (DKFSHR). Helical transmembrane passes span 76 to 96 (KMITSAMIITGLLGLLMATYP) and 97 to 117 (PLWVMLCIQIAFAITTILMLW). Residues 118–138 (SVSIKAASLLGDHSEQGKIMG) lie on the Cytoplasmic side of the membrane. Residues 139–159 (WMEGLRGVGVMSLAVFTMWVF) form a helical membrane-spanning segment. The Periplasmic portion of the chain corresponds to 160-171 (SRFAPDDSTSLK). Residues 172-192 (TVIIIYSVVYILLGILCWFFV) traverse the membrane as a helical segment. The Cytoplasmic segment spans residues 193–219 (SDNNNLRSANNEEKQSFQLSDILAVLR). The helical transmembrane segment at 220-240 (ISTTWYCSMVIFGVFTIYAIL) threads the bilayer. The Periplasmic portion of the chain corresponds to 241 to 259 (SYSTNYLTEMYGMSLVAAS). Residues 260–280 (YMGIVINKIFRALCGPLGGII) form a helical membrane-spanning segment. Residues 281-291 (TTYSKVKSPTR) lie on the Cytoplasmic side of the membrane. Residues 292–312 (VIQILSVLGLLTLTALLVTNS) traverse the membrane as a helical segment. Residue asparagine 313 is a topological domain, periplasmic. Residues 314-334 (PQSVAMGIGLILLLGFTCYAS) traverse the membrane as a helical segment. The Cytoplasmic segment spans residues 335–354 (RGLYWACPGEARTPSYIMGT). Residues 355–375 (TVGICSVIGFLPDVFVYPIIG) traverse the membrane as a helical segment. The Periplasmic portion of the chain corresponds to 376–388 (HWQDTLPAAEAYR). The chain crosses the membrane as a helical span at residues 389-409 (NMWLMGMAALGMVIVFTFLLF). Residues 410-425 (QKIRTADSAPAMASSK) lie on the Cytoplasmic side of the membrane.

The protein to E.coli YihN.

It is found in the cell inner membrane. The chain is Inner membrane protein YqcE (yqcE) from Escherichia coli (strain K12).